A 282-amino-acid chain; its full sequence is tRNA uridine(34) hydroxylase (282 aa).

The Rhodanese domain occupies 128-222 (DGRPVVMLDT…YFEEVGGSHY (95 aa)). The active-site Cysteine persulfide intermediate is cysteine 182.

This sequence belongs to the TrhO family.

The enzyme catalyses uridine(34) in tRNA + AH2 + O2 = 5-hydroxyuridine(34) in tRNA + A + H2O. Functionally, catalyzes oxygen-dependent 5-hydroxyuridine (ho5U) modification at position 34 in tRNAs. This Cupriavidus metallidurans (strain ATCC 43123 / DSM 2839 / NBRC 102507 / CH34) (Ralstonia metallidurans) protein is tRNA uridine(34) hydroxylase.